Reading from the N-terminus, the 356-residue chain is GATA zinc finger domain-containing protein 17 (356 aa).

Residues 91–119 (LKEFDALEASLNAELECLELQYSSDTSEL) adopt a coiled-coil conformation. A compositionally biased stretch (low complexity) spans 158-188 (TASTSTSTPTNTTTTTTTTSNSLTKNNNSAL). The disordered stretch occupies residues 158-294 (TASTSTSTPT…DITEESKVKE (137 aa)). Acidic residues predominate over residues 206–228 (SSDDEEDDQKDDQDKDDSDEDNV). Over residues 260-284 (TAITTTTTPITTTDSNIIGTTTTTD) the composition is skewed to low complexity. The GATA-type zinc finger occupies 304–331 (CYVCKVTETPYWRRGTDNGVVVDLCNEC).

In Dictyostelium discoideum (Social amoeba), this protein is GATA zinc finger domain-containing protein 17 (gtaQ).